The sequence spans 115 residues: uncharacterized protein (115 aa).

The Cytoplasmic segment spans residues 1 to 11 (MKLTKEKKNDC). A helical transmembrane segment spans residues 12–32 (LVGVSYIPPLNFFTLTFLFLL). Residues 33–52 (RIEKVHLSLSLSLSLSLRFY) lie on the Extracellular side of the membrane. A helical transmembrane segment spans residues 53 to 73 (YFHNVCYPSLFLFFCFVIPFF). At 74–78 (YSVRF) the chain is on the cytoplasmic side. A helical membrane pass occupies residues 79–98 (ILLYLHILRSFYELNILLLY). The Extracellular portion of the chain corresponds to 99–115 (GAENSRRQSPPGYYVIR).

The protein localises to the membrane. This is an uncharacterized protein from Saccharomyces cerevisiae (strain ATCC 204508 / S288c) (Baker's yeast).